The sequence spans 548 residues: Probable malate:quinone oxidoreductase (548 aa).

Residues 521–548 (DKPQAADSTPKPQLKPQPVQKEVADIAL) are disordered. Residues 530-541 (PKPQLKPQPVQK) are compositionally biased toward low complexity.

This sequence belongs to the MQO family. It depends on FAD as a cofactor.

It carries out the reaction (S)-malate + a quinone = a quinol + oxaloacetate. It functions in the pathway carbohydrate metabolism; tricarboxylic acid cycle; oxaloacetate from (S)-malate (quinone route): step 1/1. The protein is Probable malate:quinone oxidoreductase of Escherichia coli O139:H28 (strain E24377A / ETEC).